Reading from the N-terminus, the 124-residue chain is Small ribosomal subunit protein uS12 (124 aa).

The residue at position 89 (aspartate 89) is a 3-methylthioaspartic acid.

Belongs to the universal ribosomal protein uS12 family. In terms of assembly, part of the 30S ribosomal subunit. Contacts proteins S8 and S17. May interact with IF1 in the 30S initiation complex.

With S4 and S5 plays an important role in translational accuracy. Its function is as follows. Interacts with and stabilizes bases of the 16S rRNA that are involved in tRNA selection in the A site and with the mRNA backbone. Located at the interface of the 30S and 50S subunits, it traverses the body of the 30S subunit contacting proteins on the other side and probably holding the rRNA structure together. The combined cluster of proteins S8, S12 and S17 appears to hold together the shoulder and platform of the 30S subunit. The polypeptide is Small ribosomal subunit protein uS12 (Shewanella putrefaciens (strain CN-32 / ATCC BAA-453)).